Here is a 379-residue protein sequence, read N- to C-terminus: UDP-N-acetylglucosamine--N-acetylmuramyl-(pentapeptide) pyrophosphoryl-undecaprenol N-acetylglucosamine transferase (379 aa).

Residues 10–12 (TGG), N124, and R165 each bind UDP-N-acetyl-alpha-D-glucosamine. Residues 174 to 195 (TRDQGPGIRDQEKHMTDSTGPA) are disordered. 3 residues coordinate UDP-N-acetyl-alpha-D-glucosamine: S211, I266, and Q311.

It belongs to the glycosyltransferase 28 family. MurG subfamily.

The protein resides in the cell inner membrane. The catalysed reaction is di-trans,octa-cis-undecaprenyl diphospho-N-acetyl-alpha-D-muramoyl-L-alanyl-D-glutamyl-meso-2,6-diaminopimeloyl-D-alanyl-D-alanine + UDP-N-acetyl-alpha-D-glucosamine = di-trans,octa-cis-undecaprenyl diphospho-[N-acetyl-alpha-D-glucosaminyl-(1-&gt;4)]-N-acetyl-alpha-D-muramoyl-L-alanyl-D-glutamyl-meso-2,6-diaminopimeloyl-D-alanyl-D-alanine + UDP + H(+). Its pathway is cell wall biogenesis; peptidoglycan biosynthesis. Cell wall formation. Catalyzes the transfer of a GlcNAc subunit on undecaprenyl-pyrophosphoryl-MurNAc-pentapeptide (lipid intermediate I) to form undecaprenyl-pyrophosphoryl-MurNAc-(pentapeptide)GlcNAc (lipid intermediate II). In Pelobacter propionicus (strain DSM 2379 / NBRC 103807 / OttBd1), this protein is UDP-N-acetylglucosamine--N-acetylmuramyl-(pentapeptide) pyrophosphoryl-undecaprenol N-acetylglucosamine transferase.